An 880-amino-acid polypeptide reads, in one-letter code: Nonsense-mediated mRNA decay factor SMG7-like (880 aa).

TPR repeat units follow at residues 149–183 and 184–217; these read QEQYLKAHEHPNWSTAATYYLEAAKSWPDSGNPHN and QLAVLATYVSDELLALYHCVRSLAVKEPFPGASN. The disordered stretch occupies residues 669–711; the sequence is RLGLSKPNGLGPIDETGPVSAFDSLSINSSTEHPASSYSPPTP. Positions 691–701 are enriched in polar residues; the sequence is DSLSINSSTEH.

Functionally, may play a role in growth and development. The polypeptide is Nonsense-mediated mRNA decay factor SMG7-like (Arabidopsis thaliana (Mouse-ear cress)).